The sequence spans 46 residues: Iota-conotoxin-like Fi11.8 (46 aa).

4-hydroxyproline occurs at positions 2 and 11. 4 disulfides stabilise this stretch: cysteine 5–cysteine 19, cysteine 12–cysteine 22, cysteine 18–cysteine 27, and cysteine 21–cysteine 38. Proline 29 is modified (4-hydroxyproline). Tryptophan 33 is modified (6'-bromotryptophan). Phenylalanine 44 bears the D-phenylalanine mark.

It belongs to the conotoxin I1 superfamily. Expressed by the venom duct.

It localises to the secreted. In terms of biological role, iota-conotoxins bind to voltage-gated sodium channels (Nav) and act as agonists by shifting the voltage-dependence of activation to more hyperpolarized levels. Produces general excitatory symptoms. This Conus figulinus (Fig cone) protein is Iota-conotoxin-like Fi11.8.